The following is a 324-amino-acid chain: Probable cell division protein WhiA (324 aa).

Residues 275–308 (SLEELGALADPPLTKDAIAGRIRRLIAMADRRAD) constitute a DNA-binding region (H-T-H motif).

The protein belongs to the WhiA family.

Involved in cell division and chromosome segregation. The sequence is that of Probable cell division protein WhiA from Acidothermus cellulolyticus (strain ATCC 43068 / DSM 8971 / 11B).